The following is a 374-amino-acid chain: 2-aminoethylphosphonate--pyruvate transaminase 1 (374 aa).

An N6-(pyridoxal phosphate)lysine modification is found at K195.

It belongs to the class-V pyridoxal-phosphate-dependent aminotransferase family. PhnW subfamily. As to quaternary structure, homodimer. Requires pyridoxal 5'-phosphate as cofactor.

It carries out the reaction (2-aminoethyl)phosphonate + pyruvate = phosphonoacetaldehyde + L-alanine. In terms of biological role, involved in phosphonate degradation. This is 2-aminoethylphosphonate--pyruvate transaminase 1 from Polaromonas sp. (strain JS666 / ATCC BAA-500).